The following is an 867-amino-acid chain: Leucine--tRNA ligase (867 aa).

Residues 40-51 carry the 'HIGH' region motif; sequence PYPSGAGLHVGH. The short motif at 638 to 642 is the 'KMSKS' region element; it reads KMSKS. Lysine 641 contributes to the ATP binding site.

It belongs to the class-I aminoacyl-tRNA synthetase family.

The protein localises to the cytoplasm. It carries out the reaction tRNA(Leu) + L-leucine + ATP = L-leucyl-tRNA(Leu) + AMP + diphosphate. This Leptospira biflexa serovar Patoc (strain Patoc 1 / Ames) protein is Leucine--tRNA ligase.